Here is a 428-residue protein sequence, read N- to C-terminus: Histidinol dehydrogenase (428 aa).

The NAD(+) site is built by tyrosine 124, glutamine 186, and asparagine 209. Residues serine 233, glutamine 255, and histidine 258 each contribute to the substrate site. Positions 255 and 258 each coordinate Zn(2+). Residues glutamate 322 and histidine 323 each act as proton acceptor in the active site. Substrate is bound by residues histidine 323, aspartate 356, glutamate 410, and histidine 415. Zn(2+) is bound at residue aspartate 356. Histidine 415 provides a ligand contact to Zn(2+).

This sequence belongs to the histidinol dehydrogenase family. Zn(2+) is required as a cofactor.

The enzyme catalyses L-histidinol + 2 NAD(+) + H2O = L-histidine + 2 NADH + 3 H(+). Its pathway is amino-acid biosynthesis; L-histidine biosynthesis; L-histidine from 5-phospho-alpha-D-ribose 1-diphosphate: step 9/9. In terms of biological role, catalyzes the sequential NAD-dependent oxidations of L-histidinol to L-histidinaldehyde and then to L-histidine. This is Histidinol dehydrogenase from Bacteroides fragilis (strain ATCC 25285 / DSM 2151 / CCUG 4856 / JCM 11019 / LMG 10263 / NCTC 9343 / Onslow / VPI 2553 / EN-2).